A 284-amino-acid polypeptide reads, in one-letter code: RNase adapter protein RapZ (284 aa).

An ATP-binding site is contributed by 8–15; the sequence is GRSGSGKS. 56–59 contributes to the GTP binding site; sequence DVRN. The tract at residues 266 to 284 is RNA-binding; sequence RSRGKNVQSRHRTLEKRKT.

Belongs to the RapZ-like family. RapZ subfamily. In terms of assembly, homotrimer.

Functionally, modulates the synthesis of GlmS, by affecting the processing and stability of the regulatory small RNA GlmZ. When glucosamine-6-phosphate (GlcN6P) concentrations are high in the cell, RapZ binds GlmZ and targets it to cleavage by RNase E. Consequently, GlmZ is inactivated and unable to activate GlmS synthesis. Under low GlcN6P concentrations, RapZ is sequestered and inactivated by an other regulatory small RNA, GlmY, preventing GlmZ degradation and leading to synthesis of GlmS. This Salmonella typhimurium (strain LT2 / SGSC1412 / ATCC 700720) protein is RNase adapter protein RapZ.